The sequence spans 184 residues: Putative YfeABCD regulator YfeE (184 aa).

The next 3 membrane-spanning stretches (helical) occupy residues 15–35 (IAGW…IINF), 84–104 (LSAG…GLSL), and 162–182 (ILPS…GIMI).

To E.coli YniB.

It is found in the cell membrane. Putative regulator of YfeABCD, an ABC transporter locus involved in inorganic iron transport. This Yersinia pestis protein is Putative YfeABCD regulator YfeE (yfeE).